The sequence spans 204 residues: Guanylate kinase (204 aa).

A Guanylate kinase-like domain is found at Gly5–Asp184. Gly12–Gly19 is a binding site for ATP.

The protein belongs to the guanylate kinase family.

The protein resides in the cytoplasm. It carries out the reaction GMP + ATP = GDP + ADP. In terms of biological role, essential for recycling GMP and indirectly, cGMP. The protein is Guanylate kinase of Lactobacillus acidophilus (strain ATCC 700396 / NCK56 / N2 / NCFM).